A 305-amino-acid chain; its full sequence is Phosphoribosylaminoimidazole-succinocarboxamide synthase (305 aa).

Belongs to the SAICAR synthetase family.

The enzyme catalyses 5-amino-1-(5-phospho-D-ribosyl)imidazole-4-carboxylate + L-aspartate + ATP = (2S)-2-[5-amino-1-(5-phospho-beta-D-ribosyl)imidazole-4-carboxamido]succinate + ADP + phosphate + 2 H(+). The protein operates within purine metabolism; IMP biosynthesis via de novo pathway; 5-amino-1-(5-phospho-D-ribosyl)imidazole-4-carboxamide from 5-amino-1-(5-phospho-D-ribosyl)imidazole-4-carboxylate: step 1/2. The sequence is that of Phosphoribosylaminoimidazole-succinocarboxamide synthase from Albidiferax ferrireducens (strain ATCC BAA-621 / DSM 15236 / T118) (Rhodoferax ferrireducens).